A 157-amino-acid polypeptide reads, in one-letter code: 2-C-methyl-D-erythritol 2,4-cyclodiphosphate synthase (157 aa).

Residues Asp8 and His10 each coordinate a divalent metal cation. Residues 8–10 and 34–35 each bind 4-CDP-2-C-methyl-D-erythritol 2-phosphate; these read DVH and HS. His42 contacts a divalent metal cation. Residues 56–58, 61–65, 100–106, 132–135, Phe139, and Arg142 contribute to the 4-CDP-2-C-methyl-D-erythritol 2-phosphate site; these read DIG, FPDTD, AQAPKMA, and TTTE.

It belongs to the IspF family. Homotrimer. It depends on a divalent metal cation as a cofactor.

It carries out the reaction 4-CDP-2-C-methyl-D-erythritol 2-phosphate = 2-C-methyl-D-erythritol 2,4-cyclic diphosphate + CMP. Its pathway is isoprenoid biosynthesis; isopentenyl diphosphate biosynthesis via DXP pathway; isopentenyl diphosphate from 1-deoxy-D-xylulose 5-phosphate: step 4/6. In terms of biological role, involved in the biosynthesis of isopentenyl diphosphate (IPP) and dimethylallyl diphosphate (DMAPP), two major building blocks of isoprenoid compounds. Catalyzes the conversion of 4-diphosphocytidyl-2-C-methyl-D-erythritol 2-phosphate (CDP-ME2P) to 2-C-methyl-D-erythritol 2,4-cyclodiphosphate (ME-CPP) with a corresponding release of cytidine 5-monophosphate (CMP). The protein is 2-C-methyl-D-erythritol 2,4-cyclodiphosphate synthase of Edwardsiella ictaluri (strain 93-146).